We begin with the raw amino-acid sequence, 645 residues long: MDLQEKIRTLPTGPGVYLYKNADGEVIYVGKAKNLRSRVRSYLLEASQANAKTGSLMREAVDLDYITVGNEHEALALENNLIKQRKPRFNVLLRDDKTYPYVKLTLGDRYPKVFVTRRLRKDGAAYYGPFFPGNLAYRIVDLIHRSFLLPSCKVDLSRYHARACLQYYIKRCLGPCVKHLTTPEAYREAVRDAQWFLEGRGADLERSLEVRMQEAAAAEQFELAAKYRDLLVTLHQLQEKQRVASADDDDADVFGYHYENGMLAVNLFHMRGGKMVDRREFFWEELPEFMEEGAQEEEVLPAQAEGRGEVQVELRFEPGAFFSALLKQIYIEQPYVPRSIYVPVNFADREALAGLLAEQTHHRIELAVPQRGDKRSLVDLAGQNARQSYEQRFRVMQPNQKAIQEALQDALMLEELPRRIECFDISHIQGAETVASMVVWENGAMKKADYRKFQIKTVSGVDDFASMREVLTRRYRRVIEEKQAMPDVILIDGGIGQLRAAAAALEELGQTTQTVASIAKREEIIYLYGHEDEPIVLERRSPVLHLVQRIRDESHRFAIAYHRKRREMRDRDSELLEIPGVGTRTRTRLLEHFGSLRGVRKADVEALTAVVPRPTAEAIAAHFQGEKAEPEAAAGLVRIDESKTV.

The region spanning 12–91 (TGPGVYLYKN…IKQRKPRFNV (80 aa)) is the GIY-YIG domain. One can recognise a UVR domain in the interval 202-237 (ADLERSLEVRMQEAAAAEQFELAAKYRDLLVTLHQL).

This sequence belongs to the UvrC family. As to quaternary structure, interacts with UvrB in an incision complex.

The protein resides in the cytoplasm. The UvrABC repair system catalyzes the recognition and processing of DNA lesions. UvrC both incises the 5' and 3' sides of the lesion. The N-terminal half is responsible for the 3' incision and the C-terminal half is responsible for the 5' incision. This chain is UvrABC system protein C, found in Acidobacterium capsulatum (strain ATCC 51196 / DSM 11244 / BCRC 80197 / JCM 7670 / NBRC 15755 / NCIMB 13165 / 161).